A 79-amino-acid chain; its full sequence is Delta-hormotoxin-Cpt1a (79 aa).

An N-terminal signal peptide occupies residues 1–20 (MKTQVLAVFVLCVLFCLAES). Positions 21 to 31 (RTTLNKRIDIA) are excised as a propeptide. Cystine bridges form between Cys-36/Cys-75, Cys-38/Cys-66, and Cys-56/Cys-76.

The protein belongs to the sea anemone sodium channel inhibitory toxin family.

It is found in the secreted. Its subcellular location is the nematocyst. Its function is as follows. In neuromuscular preparation of crustaceans, the toxin increased neurotransmitter release, causing repetitive firing of the axons. May affect sodium channels (Nav). The sequence is that of Delta-hormotoxin-Cpt1a from Calliactis parasitica (Sea anemone).